A 64-amino-acid polypeptide reads, in one-letter code: U-myrmeciitoxin(01)-Mg4b (64 aa).

The first 25 residues, 1 to 25 (MGKIFFFVLMIAIIGSTFLIEEALG), serve as a signal peptide directing secretion.

This sequence belongs to the ant myrmeciitoxin-01 family. In terms of assembly, homodimer; disulfide-linked. In terms of processing, contains 2 intrachain disulfide bonds (per chain) and 1 interchain disulfide bond. Expressed by the venom gland.

The protein resides in the secreted. In terms of biological role, may have antimicrobial properties, like most ant linear peptides. The chain is U-myrmeciitoxin(01)-Mg4b from Myrmecia gulosa (Red bulldog ant).